The primary structure comprises 490 residues: Aspartyl/glutamyl-tRNA(Asn/Gln) amidotransferase subunit B (490 aa).

Belongs to the GatB/GatE family. GatB subfamily. In terms of assembly, heterotrimer of A, B and C subunits.

It carries out the reaction L-glutamyl-tRNA(Gln) + L-glutamine + ATP + H2O = L-glutaminyl-tRNA(Gln) + L-glutamate + ADP + phosphate + H(+). It catalyses the reaction L-aspartyl-tRNA(Asn) + L-glutamine + ATP + H2O = L-asparaginyl-tRNA(Asn) + L-glutamate + ADP + phosphate + 2 H(+). Allows the formation of correctly charged Asn-tRNA(Asn) or Gln-tRNA(Gln) through the transamidation of misacylated Asp-tRNA(Asn) or Glu-tRNA(Gln) in organisms which lack either or both of asparaginyl-tRNA or glutaminyl-tRNA synthetases. The reaction takes place in the presence of glutamine and ATP through an activated phospho-Asp-tRNA(Asn) or phospho-Glu-tRNA(Gln). The protein is Aspartyl/glutamyl-tRNA(Asn/Gln) amidotransferase subunit B of Methylorubrum extorquens (strain PA1) (Methylobacterium extorquens).